The chain runs to 141 residues: Large ribosomal subunit protein mL42 (141 aa).

The transit peptide at 1–31 (MTAAVKWAVSHRTIWRHLFPIQNGAISSACH) directs the protein to the mitochondrion.

Belongs to the mitochondrion-specific ribosomal protein mL42 family. In terms of assembly, component of the mitochondrial ribosome large subunit (39S) which comprises a 16S rRNA and about 50 distinct proteins. Component of the mitochondrial ribosome small subunit (28S) which comprises a 12S rRNA and about 30 distinct proteins.

The protein resides in the mitochondrion. The polypeptide is Large ribosomal subunit protein mL42 (Mrpl42) (Rattus norvegicus (Rat)).